A 416-amino-acid chain; its full sequence is UDP-N-acetylmuramoylalanine--D-glutamate ligase (416 aa).

104–110 (GSNGKST) is an ATP binding site.

This sequence belongs to the MurCDEF family.

It localises to the cytoplasm. It catalyses the reaction UDP-N-acetyl-alpha-D-muramoyl-L-alanine + D-glutamate + ATP = UDP-N-acetyl-alpha-D-muramoyl-L-alanyl-D-glutamate + ADP + phosphate + H(+). It participates in cell wall biogenesis; peptidoglycan biosynthesis. Its function is as follows. Cell wall formation. Catalyzes the addition of glutamate to the nucleotide precursor UDP-N-acetylmuramoyl-L-alanine (UMA). The chain is UDP-N-acetylmuramoylalanine--D-glutamate ligase from Francisella tularensis subsp. tularensis (strain WY96-3418).